Here is a 163-residue protein sequence, read N- to C-terminus: ATP synthase subunit b (163 aa).

Positions 1-11 (MLWKANVWVLG) are excised as a propeptide. The helical transmembrane segment at 16–36 (GISGGTIIYQLLMFIILLALL) threads the bilayer.

Belongs to the ATPase B chain family. F-type ATPases have 2 components, F(1) - the catalytic core - and F(0) - the membrane proton channel. F(1) has five subunits: alpha(3), beta(3), gamma(1), delta(1), epsilon(1). F(0) has three main subunits: a(1), b(2) and c(10-14). The alpha and beta chains form an alternating ring which encloses part of the gamma chain. F(1) is attached to F(0) by a central stalk formed by the gamma and epsilon chains, while a peripheral stalk is formed by the delta and b chains.

It is found in the cell membrane. Functionally, f(1)F(0) ATP synthase produces ATP from ADP in the presence of a proton or sodium gradient. F-type ATPases consist of two structural domains, F(1) containing the extramembraneous catalytic core and F(0) containing the membrane proton channel, linked together by a central stalk and a peripheral stalk. During catalysis, ATP synthesis in the catalytic domain of F(1) is coupled via a rotary mechanism of the central stalk subunits to proton translocation. Component of the F(0) channel, it forms part of the peripheral stalk, linking F(1) to F(0). The sequence is that of ATP synthase subunit b from Bacillus sp. (strain PS3).